A 555-amino-acid polypeptide reads, in one-letter code: Phosphoglucomutase (555 aa).

Alpha-D-glucose 1,6-bisphosphate contacts are provided by Arg22 and Ser114. Ser114 functions as the Phosphoserine intermediate in the catalytic mechanism. Positions 114, 279, 281, and 283 each coordinate Mg(2+). Ser114 is subject to Phosphoserine. Alpha-D-glucose 1,6-bisphosphate is bound by residues Asp283, Arg284, Thr347, Glu366, Ser368, and Lys379.

The protein belongs to the phosphohexose mutase family. In terms of assembly, monomer. It depends on Mg(2+) as a cofactor.

Its subcellular location is the cytoplasm. The enzyme catalyses alpha-D-glucose 1-phosphate = alpha-D-glucose 6-phosphate. It carries out the reaction O-phospho-L-seryl-[protein] + alpha-D-glucose 1-phosphate = alpha-D-glucose 1,6-bisphosphate + L-seryl-[protein]. It catalyses the reaction alpha-D-glucose 1,6-bisphosphate + L-seryl-[protein] = O-phospho-L-seryl-[protein] + alpha-D-glucose 6-phosphate. Its function is as follows. Catalyzes the reversible isomerization of alpha-D-glucose 1-phosphate to alpha-D-glucose 6-phosphate. The mechanism proceeds via the intermediate compound alpha-D-glucose 1,6-bisphosphate. Key enzyme in hexose metabolism. The reverse reaction is an essential step for biosynthesis because glucose 1-phosphate is the starting point for the synthesis of UDP-glucose, which acts as a precursor for the synthesis of oligosaccharides and trehalose. In Aspergillus fumigatus (strain ATCC MYA-4609 / CBS 101355 / FGSC A1100 / Af293) (Neosartorya fumigata), this protein is Phosphoglucomutase (pgmA).